Here is a 176-residue protein sequence, read N- to C-terminus: Cell division protein ZapC (176 aa).

The protein belongs to the ZapC family. As to quaternary structure, interacts directly with FtsZ.

The protein localises to the cytoplasm. Its function is as follows. Contributes to the efficiency of the cell division process by stabilizing the polymeric form of the cell division protein FtsZ. Acts by promoting interactions between FtsZ protofilaments and suppressing the GTPase activity of FtsZ. This Pseudoalteromonas translucida (strain TAC 125) protein is Cell division protein ZapC.